The sequence spans 154 residues: Urease accessory protein UreE (154 aa).

This sequence belongs to the UreE family.

It is found in the cytoplasm. Its function is as follows. Involved in urease metallocenter assembly. Binds nickel. Probably functions as a nickel donor during metallocenter assembly. This Escherichia coli O157:H7 protein is Urease accessory protein UreE.